The primary structure comprises 49 residues: Large ribosomal subunit protein bL33 (49 aa).

The protein belongs to the bacterial ribosomal protein bL33 family.

In Syntrophotalea carbinolica (strain DSM 2380 / NBRC 103641 / GraBd1) (Pelobacter carbinolicus), this protein is Large ribosomal subunit protein bL33.